A 186-amino-acid polypeptide reads, in one-letter code: Elongation factor P (186 aa).

The protein belongs to the elongation factor P family.

Its subcellular location is the cytoplasm. It functions in the pathway protein biosynthesis; polypeptide chain elongation. Involved in peptide bond synthesis. Stimulates efficient translation and peptide-bond synthesis on native or reconstituted 70S ribosomes in vitro. Probably functions indirectly by altering the affinity of the ribosome for aminoacyl-tRNA, thus increasing their reactivity as acceptors for peptidyl transferase. The protein is Elongation factor P of Maridesulfovibrio salexigens (strain ATCC 14822 / DSM 2638 / NCIMB 8403 / VKM B-1763) (Desulfovibrio salexigens).